Here is a 176-residue protein sequence, read N- to C-terminus: Phosphopantetheine adenylyltransferase (176 aa).

S8 contacts substrate. ATP is bound by residues 8–9 and H16; that span reads SF. Substrate-binding residues include K40, T72, and R86. Residues 87-89, E97, and 122-128 contribute to the ATP site; these read GLR and YSFLSSS.

Belongs to the bacterial CoaD family. In terms of assembly, homohexamer. It depends on Mg(2+) as a cofactor.

Its subcellular location is the cytoplasm. It catalyses the reaction (R)-4'-phosphopantetheine + ATP + H(+) = 3'-dephospho-CoA + diphosphate. Its pathway is cofactor biosynthesis; coenzyme A biosynthesis; CoA from (R)-pantothenate: step 4/5. In terms of biological role, reversibly transfers an adenylyl group from ATP to 4'-phosphopantetheine, yielding dephospho-CoA (dPCoA) and pyrophosphate. This is Phosphopantetheine adenylyltransferase from Acaryochloris marina (strain MBIC 11017).